The chain runs to 186 residues: Adenylate kinase (186 aa).

Residue glycine 10 to threonine 15 coordinates ATP. The interval alanine 30–valine 55 is NMP. AMP contacts are provided by residues threonine 31, arginine 36, glycine 53–valine 55, glycine 81–arginine 84, and glutamine 88. The interval alanine 122–aspartate 132 is LID. An ATP-binding site is contributed by arginine 123. AMP-binding residues include arginine 129 and arginine 140. Position 168 (lysine 168) interacts with ATP.

Belongs to the adenylate kinase family. Monomer.

Its subcellular location is the cytoplasm. It carries out the reaction AMP + ATP = 2 ADP. The protein operates within purine metabolism; AMP biosynthesis via salvage pathway; AMP from ADP: step 1/1. In terms of biological role, catalyzes the reversible transfer of the terminal phosphate group between ATP and AMP. Plays an important role in cellular energy homeostasis and in adenine nucleotide metabolism. The polypeptide is Adenylate kinase (Tropheryma whipplei (strain TW08/27) (Whipple's bacillus)).